The chain runs to 160 residues: Archaemetzincin (160 aa).

His-117 contributes to the Zn(2+) binding site. The active-site Proton acceptor is the Glu-118. His-121, His-127, Cys-128, Cys-132, Cys-151, and Cys-154 together coordinate Zn(2+).

The protein belongs to the peptidase M54 family. As to quaternary structure, monomer. The cofactor is Zn(2+).

Functionally, probable zinc metalloprotease whose natural substrate is unknown. This is Archaemetzincin from Archaeoglobus fulgidus (strain ATCC 49558 / DSM 4304 / JCM 9628 / NBRC 100126 / VC-16).